Here is a 309-residue protein sequence, read N- to C-terminus: Probable manganese-dependent inorganic pyrophosphatase (309 aa).

Residues His9, Asp13, Asp15, Asp75, His97, and Asp149 each coordinate Mn(2+).

It belongs to the PPase class C family. Requires Mn(2+) as cofactor.

It localises to the cytoplasm. It catalyses the reaction diphosphate + H2O = 2 phosphate + H(+). The protein is Probable manganese-dependent inorganic pyrophosphatase of Bacillus mycoides (strain KBAB4) (Bacillus weihenstephanensis).